A 77-amino-acid chain; its full sequence is MKLTCMMIVAVLFLTAWTFATADDSGNGLENLFPKAHHEMKNPEASKLNKRCKQADEPCDVFSLDCCTGICLGVCMW.

An N-terminal signal peptide occupies residues 1-22 (MKLTCMMIVAVLFLTAWTFATA). A propeptide spanning residues 23 to 49 (DDSGNGLENLFPKAHHEMKNPEASKLN) is cleaved from the precursor. Cystine bridges form between C52-C67, C59-C71, and C66-C75.

Expressed by the venom duct.

It localises to the secreted. In terms of biological role, omega-conotoxins act at presynaptic membranes, they bind and block voltage-gated calcium channels (Cav). Specifically acts on L-type channels. It blocks molluscan dihydropyridine-sensitive calcium channels. The polypeptide is Omega-conotoxin TxVII (Conus textile (Cloth-of-gold cone)).